Consider the following 244-residue polypeptide: 5-oxoprolinase subunit A (244 aa).

This sequence belongs to the LamB/PxpA family. Forms a complex composed of PxpA, PxpB and PxpC.

The catalysed reaction is 5-oxo-L-proline + ATP + 2 H2O = L-glutamate + ADP + phosphate + H(+). In terms of biological role, catalyzes the cleavage of 5-oxoproline to form L-glutamate coupled to the hydrolysis of ATP to ADP and inorganic phosphate. This Salmonella typhi protein is 5-oxoprolinase subunit A.